A 434-amino-acid chain; its full sequence is Acyl transferase 15 (434 aa).

Active-site proton acceptor residues include H164 and D371.

The protein belongs to the plant acyltransferase family.

Its function is as follows. Involved in the incorporation of ferulate into the cell wall. This is Acyl transferase 15 from Oryza sativa subsp. japonica (Rice).